Consider the following 110-residue polypeptide: Membrane-associated protein slr1513 (110 aa).

The protein resides in the cellular thylakoid membrane. It localises to the cell membrane. In Synechocystis sp. (strain ATCC 27184 / PCC 6803 / Kazusa), this protein is Membrane-associated protein slr1513.